The following is an 899-amino-acid chain: Protein translocase subunit SecA (899 aa).

Residues Q87, 105–109, and D512 contribute to the ATP site; that span reads GEGKT. Disordered regions lie at residues 573 to 592 and 861 to 899; these read RRIDNQLRGRSGRQGDPGSS and ITVNDDEHPAEPAKSQKNAGRNEPCPCGSGKKYKKCCGK. Residues C885, C887, C896, and C897 each contribute to the Zn(2+) site.

Belongs to the SecA family. As to quaternary structure, monomer and homodimer. Part of the essential Sec protein translocation apparatus which comprises SecA, SecYEG and auxiliary proteins SecDF-YajC and YidC. Requires Zn(2+) as cofactor.

It is found in the cell inner membrane. The protein localises to the cytoplasm. It catalyses the reaction ATP + H2O + cellular proteinSide 1 = ADP + phosphate + cellular proteinSide 2.. Functionally, part of the Sec protein translocase complex. Interacts with the SecYEG preprotein conducting channel. Has a central role in coupling the hydrolysis of ATP to the transfer of proteins into and across the cell membrane, serving as an ATP-driven molecular motor driving the stepwise translocation of polypeptide chains across the membrane. The polypeptide is Protein translocase subunit SecA (Trichlorobacter lovleyi (strain ATCC BAA-1151 / DSM 17278 / SZ) (Geobacter lovleyi)).